Here is a 429-residue protein sequence, read N- to C-terminus: Enolase (429 aa).

Gln-163 contributes to the (2R)-2-phosphoglycerate binding site. Glu-205 acts as the Proton donor in catalysis. Positions 242, 286, and 313 each coordinate Mg(2+). Residues Lys-338, Arg-367, Ser-368, and Lys-389 each coordinate (2R)-2-phosphoglycerate. The active-site Proton acceptor is Lys-338.

It belongs to the enolase family. Mg(2+) is required as a cofactor.

Its subcellular location is the cytoplasm. It is found in the secreted. It localises to the cell surface. It carries out the reaction (2R)-2-phosphoglycerate = phosphoenolpyruvate + H2O. It functions in the pathway carbohydrate degradation; glycolysis; pyruvate from D-glyceraldehyde 3-phosphate: step 4/5. Catalyzes the reversible conversion of 2-phosphoglycerate (2-PG) into phosphoenolpyruvate (PEP). It is essential for the degradation of carbohydrates via glycolysis. The protein is Enolase of Thermoanaerobacter pseudethanolicus (strain ATCC 33223 / 39E) (Clostridium thermohydrosulfuricum).